A 55-amino-acid chain; its full sequence is Large ribosomal subunit protein bL33 (55 aa).

This sequence belongs to the bacterial ribosomal protein bL33 family.

The protein is Large ribosomal subunit protein bL33 of Bifidobacterium longum (strain DJO10A).